A 106-amino-acid polypeptide reads, in one-letter code: Large ribosomal subunit protein uL24 (106 aa).

Belongs to the universal ribosomal protein uL24 family. As to quaternary structure, part of the 50S ribosomal subunit.

One of two assembly initiator proteins, it binds directly to the 5'-end of the 23S rRNA, where it nucleates assembly of the 50S subunit. Its function is as follows. One of the proteins that surrounds the polypeptide exit tunnel on the outside of the subunit. This is Large ribosomal subunit protein uL24 from Desulforudis audaxviator (strain MP104C).